Here is a 448-residue protein sequence, read N- to C-terminus: Gamete and mating-type specific protein A (448 aa).

The first 19 residues, 1–19 (MKLILVLLCLISTLFVVKG), serve as a signal peptide directing secretion. The 128-residue stretch at 30 to 157 (VSYHNKWRSS…PDKSEVSCSY (128 aa)) folds into the SCP domain. Residues Asn-55, Asn-98, and Asn-119 are each glycosylated (N-linked (GlcNAc...) asparagine). Positions 171–242 (PKTTTPAPTT…PTTPAPTSTL (72 aa)) are disordered. A compositionally biased stretch (pro residues) spans 178–236 (PTTPAPTTPKPTTPAPTTPKPTTPAPTTPKPTTPAPTTPKPTTPAPTTPKPTTPAPTTP). Catalysis depends on residues Cys-262, His-397, and Asn-415.

The protein belongs to the peptidase C1 family.

It localises to the secreted. In terms of biological role, thiol protease that seems to be involved in the sexual development. The chain is Gamete and mating-type specific protein A (gmsA) from Dictyostelium discoideum (Social amoeba).